The sequence spans 639 residues: MDNDKKHVIPREQYRRKRHEYFHNEEREERLEREREQRERLAKKEQEQAKVNEERVKDNMRKARIEKLTQEEIHQQQHLAKLRSDNESDQELNDTNTHHLTLPEEQQLKNEHKENNDKVTKPTDEMEKQEKEDNNSASSKHDEIEPKYSRVEKNKGKQKQDNINKSEVNHLDKSEQTKKHKETKESSEDVLETNKSQKIEQKEQKASSNETSNKELNSYTKDKNNKVEDNQDLKKASSQNLAHSNKLEENEHLENEPKNNDTMDKVKDFLKLHWLKIVIVVAIILIVILISAIISTMNQNSSIEQSSNNDTKYTTTMKNAETAVKSVVTIENDTPKNITTQTIDKTNINSNNEVGSGVVYKAVDDTFFILTNTHIVGSNKRVNITYDDDKTATATVVGRDMWSDIAVLKATIKNKNMQPIKIGHSKHLKLGESILVVGNPLGNDFKNTVTKGIISGLNRAVPVDFDKDNKNDEWVNTFQIDASVNPGNSGGAVVNRVGELVGLVSLKINMPNIEGMGFAIPIDAAREIAEELEKKGEIQYPNTGIGIKNVSDLMPYERNLLKVPEDVQNGIVVEKLKENGLGKKSGLKIGDVVVELDSKSIQNNLQYRQIIFNHRQDLKTLSAKIYREGKSQEIRIKLK.

Composition is skewed to basic and acidic residues over residues 1 to 13 (MDNDKKHVIPREQ), 21 to 75 (YFHN…EIHQ), 106 to 187 (QQLK…KESS), and 195 to 205 (KSQKIEQKEQK). A disordered region spans residues 1 to 262 (MDNDKKHVIP…LENEPKNNDT (262 aa)). A compositionally biased stretch (polar residues) spans 206-219 (ASSNETSNKELNSY). 2 stretches are compositionally biased toward basic and acidic residues: residues 220 to 235 (TKDKNNKVEDNQDLKK) and 245 to 262 (NKLEENEHLENEPKNNDT). Residues 277–297 (IVIVVAIILIVILISAIISTM) traverse the membrane as a helical segment. Active-site charge relay system residues include histidine 374, aspartate 404, and serine 489. Positions 527-629 (EIAEELEKKG…TLSAKIYREG (103 aa)) constitute a PDZ domain.

Belongs to the peptidase S1C family.

The protein resides in the cell membrane. The chain is Serine protease HtrA-like from Staphylococcus haemolyticus (strain JCSC1435).